The primary structure comprises 381 residues: Cytosolic acyl coenzyme A thioester hydrolase (381 aa).

The HotDog ACOT-type 1 domain maps to 51 to 169 (PGHCIAMGRI…TLWYVPLSLK (119 aa)). Asparagine 67 is a catalytic residue. N6-acetyllysine occurs at positions 169 and 199. The HotDog ACOT-type 2 domain maps to 225-339 (SYSQSSLIHL…FFTYVSLNQE (115 aa)). Aspartate 256 is an active-site residue. Lysine 284 is modified (N6-acetyllysine). Positions 343–381 (LPVPQLVPETEDEKKRFEEGKGRYLQMKAKRQGHTEPQP) are disordered. Positions 354–364 (DEKKRFEEGKG) are enriched in basic and acidic residues.

In terms of assembly, homohexamer. In terms of processing, the N-terminus is blocked. Isoform 1 is expressed constitutively in brain and testis. Isoform 2 is induced in liver by treatment with the peroxisome proliferator.

The protein resides in the cytoplasm. It localises to the cytosol. It catalyses the reaction hexadecanoyl-CoA + H2O = hexadecanoate + CoA + H(+). It carries out the reaction dodecanoyl-CoA + H2O = dodecanoate + CoA + H(+). The catalysed reaction is tetradecanoyl-CoA + H2O = tetradecanoate + CoA + H(+). The enzyme catalyses decanoyl-CoA + H2O = decanoate + CoA + H(+). It catalyses the reaction octanoyl-CoA + H2O = octanoate + CoA + H(+). It carries out the reaction octadecanoyl-CoA + H2O = octadecanoate + CoA + H(+). The catalysed reaction is (9Z)-octadecenoyl-CoA + H2O = (9Z)-octadecenoate + CoA + H(+). It functions in the pathway lipid metabolism; fatty acid metabolism. Catalyzes the hydrolysis of acyl-CoAs into free fatty acids and coenzyme A (CoASH), regulating their respective intracellular levels. Preferentially hydrolyzes palmitoyl-CoA, but has a broad specificity acting on other fatty acyl-CoAs with chain-lengths of C8-C18. May play an important physiological function in brain. The chain is Cytosolic acyl coenzyme A thioester hydrolase (Acot7) from Rattus norvegicus (Rat).